The following is a 91-amino-acid chain: Small ribosomal subunit protein bS20 (91 aa).

Positions 1 to 23 (MANTSSAKKATRKIARRTEVNKA) are disordered.

This sequence belongs to the bacterial ribosomal protein bS20 family.

In terms of biological role, binds directly to 16S ribosomal RNA. The protein is Small ribosomal subunit protein bS20 of Rhizobium rhizogenes (strain K84 / ATCC BAA-868) (Agrobacterium radiobacter).